Here is a 99-residue protein sequence, read N- to C-terminus: Plastocyanin (99 aa).

In terms of domain architecture, Plastocyanin-like spans 1–99; the sequence is AEVLLGSSDG…AGMVGKVTVN (99 aa). Cu cation-binding residues include histidine 37, cysteine 84, histidine 87, and methionine 92.

The protein belongs to the plastocyanin family. It depends on Cu(2+) as a cofactor.

The protein localises to the plastid. The protein resides in the chloroplast thylakoid membrane. In terms of biological role, participates in electron transfer between P700 and the cytochrome b6-f complex in photosystem I. The chain is Plastocyanin (PETE) from Lactuca sativa (Garden lettuce).